Consider the following 372-residue polypeptide: Cytochrome b (372 aa).

The next 4 helical transmembrane spans lie at 32-52, 77-99, 114-134, and 180-200; these read LGFN…CLSW, FIIR…IHII, VWFF…IGYT, and LHSI…AHFF. Residues histidine 83 and histidine 97 each contribute to the heme b site. Residues histidine 184 and histidine 198 each coordinate heme b. An a ubiquinone-binding site is contributed by histidine 203. The next 4 membrane-spanning stretches (helical) occupy residues 228 to 248, 297 to 317, 330 to 350, and 351 to 371; these read YYLR…YYIC, LLFV…LIFI, LVLF…VLCF, and PLWM…VCRL.

The protein belongs to the cytochrome b family. The main subunits of complex b-c1 are: cytochrome b, cytochrome c1 and the Rieske protein. Heme b is required as a cofactor.

Its subcellular location is the mitochondrion inner membrane. Component of the ubiquinol-cytochrome c reductase complex (complex III or cytochrome b-c1 complex) that is part of the mitochondrial respiratory chain. The b-c1 complex mediates electron transfer from ubiquinol to cytochrome c. Contributes to the generation of a proton gradient across the mitochondrial membrane that is then used for ATP synthesis. The protein is Cytochrome b (MT-CYB) of Trypanoplasma borreli.